The primary structure comprises 162 residues: NADH-quinone oxidoreductase subunit I (162 aa).

2 4Fe-4S ferredoxin-type domains span residues 54–83 (RRYE…INST) and 93–122 (SSYE…ETNI). Residues C63, C66, C69, C73, C102, C105, C108, and C112 each coordinate [4Fe-4S] cluster.

The protein belongs to the complex I 23 kDa subunit family. In terms of assembly, NDH-1 is composed of 14 different subunits. Subunits NuoA, H, J, K, L, M, N constitute the membrane sector of the complex. Requires [4Fe-4S] cluster as cofactor.

The protein localises to the cell inner membrane. It catalyses the reaction a quinone + NADH + 5 H(+)(in) = a quinol + NAD(+) + 4 H(+)(out). NDH-1 shuttles electrons from NADH, via FMN and iron-sulfur (Fe-S) centers, to quinones in the respiratory chain. The immediate electron acceptor for the enzyme in this species is believed to be ubiquinone. Couples the redox reaction to proton translocation (for every two electrons transferred, four hydrogen ions are translocated across the cytoplasmic membrane), and thus conserves the redox energy in a proton gradient. The polypeptide is NADH-quinone oxidoreductase subunit I (Francisella philomiragia subsp. philomiragia (strain ATCC 25017 / CCUG 19701 / FSC 153 / O#319-036)).